The following is a 90-amino-acid chain: uncharacterized protein (90 aa).

Helical transmembrane passes span 17–37 (ILSMHLSPVSILSPVLLIYLV) and 55–75 (ICFGVSLFLSFFLVRILWGIA).

The protein localises to the membrane. This is an uncharacterized protein from Schizosaccharomyces pombe (strain 972 / ATCC 24843) (Fission yeast).